Here is a 139-residue protein sequence, read N- to C-terminus: Orientotoxin-2 (139 aa).

In terms of tissue distribution, expressed by the venom gland.

It localises to the secreted. The enzyme catalyses a 1,2-diacyl-sn-glycero-3-phosphocholine + H2O = a 1-acyl-sn-glycero-3-phosphocholine + a fatty acid + H(+). Has a highly toxic phospholipase A2 activity. This is Orientotoxin-2 from Vespa orientalis (Oriental hornet).